The sequence spans 372 residues: Inner membrane protein YbiR (372 aa).

The Periplasmic portion of the chain corresponds to 1–13 (MSLPFLRTLQGDR). 2 consecutive transmembrane segments (helical) span residues 14-34 (FFQL…FAPK) and 35-55 (SWPA…MLLT). Over 56-85 (KGVELSGYFDVLGRKMVRRFATERRLAMFM) the chain is Periplasmic. A helical membrane pass occupies residues 86–106 (VLAAALLSTFLTNDVALFIVV). Over 107 to 122 (PLTITLKRLCEIPVNR) the chain is Cytoplasmic. The chain crosses the membrane as a helical span at residues 123-143 (LIIFEALAVNAGSLLTPIGNP). The Periplasmic segment spans residues 144–155 (QNILIWGRSGLS). A helical membrane pass occupies residues 156-176 (FAGFIAQMAPLAGAMMLTLLL). Over 177–208 (LCWCCFPGKAMQYHTGVQTPEWKPRLVWSCLG) the chain is Cytoplasmic. Residues 209 to 229 (LYIVFLTALEFKQELWGLVIV) traverse the membrane as a helical segment. The Periplasmic segment spans residues 230-247 (AAGFALLARRVVLSVDWT). A helical transmembrane segment spans residues 248–268 (LLLVFMAMFIDVHLLTQLPAL). The Cytoplasmic portion of the chain corresponds to 269-283 (QGVLGNVSHLSEPGL). A helical membrane pass occupies residues 284-304 (WLTAIGLSQVISNVPSTILLL). The Periplasmic portion of the chain corresponds to 305–309 (NYVPP). Residues 310–330 (SLLLVWAVNVGGFGLLPGSLA) traverse the membrane as a helical segment. The Cytoplasmic portion of the chain corresponds to 331 to 348 (NLIALRMANDRRIWWRFH). The chain crosses the membrane as a helical span at residues 349 to 369 (LYSIPMLLWAALVGYVLLVIL). Topologically, residues 370–372 (PAN) are periplasmic.

Belongs to the CitM (TC 2.A.11) transporter family.

Its subcellular location is the cell inner membrane. This chain is Inner membrane protein YbiR (ybiR), found in Escherichia coli (strain K12).